The following is a 446-amino-acid chain: Elongation factor 1-alpha (446 aa).

The tr-type G domain occupies 5 to 230 (KNHLNLVVIG…DALDQPKRPK (226 aa)). A G1 region spans residues 14 to 21 (GHVDSGKS). A GTP-binding site is contributed by 14 to 21 (GHVDSGKS). The interval 70-74 (GITID) is G2. Residues 91–94 (DAPG) are G3. Residues 91 to 95 (DAPGH) and 153 to 156 (NKMD) contribute to the GTP site. Residues 153 to 156 (NKMD) are G4. The interval 194–196 (SGW) is G5.

Belongs to the TRAFAC class translation factor GTPase superfamily. Classic translation factor GTPase family. EF-Tu/EF-1A subfamily.

It is found in the cytoplasm. Functionally, this protein promotes the GTP-dependent binding of aminoacyl-tRNA to the A-site of ribosomes during protein biosynthesis. The chain is Elongation factor 1-alpha (EFAA) from Stylonychia lemnae (Ciliate).